The chain runs to 627 residues: Altered inheritance of mitochondria protein 9, mitochondrial (627 aa).

Residues 1–43 constitute a mitochondrion transit peptide; the sequence is MIRYTVAGHSRRCVVGASKRVGAIKCITVAATKRFISNKPNEV.

It belongs to the AIM9 family.

The protein resides in the mitochondrion. The sequence is that of Altered inheritance of mitochondria protein 9, mitochondrial (AIM9) from Saccharomyces cerevisiae (strain YJM789) (Baker's yeast).